The following is a 154-amino-acid chain: 8-oxo-dGTP diphosphatase (154 aa).

The Nudix hydrolase domain maps to 1–129 (MPQLATICYI…DHTFVEWLLE (129 aa)). Residues glycine 38, glutamate 53, glutamate 56, and glutamate 57 each contribute to the Mg(2+) site. The short motif at 38 to 59 (GKLERGETPQECAAREILEETG) is the Nudix box element.

Belongs to the Nudix hydrolase family. Homotrimer. Mg(2+) serves as cofactor.

The enzyme catalyses 8-oxo-dGTP + H2O = 8-oxo-dGMP + diphosphate + H(+). Functionally, involved in the DNA repair system to avoid A.T to G.C transversions. Degrades 8-oxo-dGTP to the monophosphate, but is also active on all of the nucleoside triphosphates. In Streptococcus pneumoniae serotype 4 (strain ATCC BAA-334 / TIGR4), this protein is 8-oxo-dGTP diphosphatase (mutX).